A 431-amino-acid polypeptide reads, in one-letter code: tRNA(Ile)-lysidine synthase (431 aa).

ATP is bound at residue 19–24 (STGIDS).

This sequence belongs to the tRNA(Ile)-lysidine synthase family.

It localises to the cytoplasm. The enzyme catalyses cytidine(34) in tRNA(Ile2) + L-lysine + ATP = lysidine(34) in tRNA(Ile2) + AMP + diphosphate + H(+). Ligates lysine onto the cytidine present at position 34 of the AUA codon-specific tRNA(Ile) that contains the anticodon CAU, in an ATP-dependent manner. Cytidine is converted to lysidine, thus changing the amino acid specificity of the tRNA from methionine to isoleucine. In Staphylococcus aureus (strain MRSA252), this protein is tRNA(Ile)-lysidine synthase.